A 445-amino-acid polypeptide reads, in one-letter code: Xylose isomerase (445 aa).

Catalysis depends on residues His99 and Asp102. Residues Glu230, Glu266, His269, Asp294, Asp305, Asp307, and Asp337 each coordinate Mg(2+).

This sequence belongs to the xylose isomerase family. In terms of assembly, homotetramer. Mg(2+) serves as cofactor.

The protein localises to the cytoplasm. The enzyme catalyses alpha-D-xylose = alpha-D-xylulofuranose. The sequence is that of Xylose isomerase from Geobacillus thermodenitrificans (strain NG80-2).